A 294-amino-acid polypeptide reads, in one-letter code: tRNA pseudouridine synthase A (294 aa).

Aspartate 64 acts as the Nucleophile in catalysis. Residue tyrosine 122 coordinates substrate.

The protein belongs to the tRNA pseudouridine synthase TruA family. In terms of assembly, homodimer.

The enzyme catalyses uridine(38/39/40) in tRNA = pseudouridine(38/39/40) in tRNA. Its function is as follows. Formation of pseudouridine at positions 38, 39 and 40 in the anticodon stem and loop of transfer RNAs. This Synechococcus sp. (strain ATCC 27144 / PCC 6301 / SAUG 1402/1) (Anacystis nidulans) protein is tRNA pseudouridine synthase A.